The following is a 207-amino-acid chain: Large ribosomal subunit protein uL4 (207 aa).

Positions 47-78 are disordered; it reads GTASSKTRAEVRGGGKKPWRQKGTGRARVGSS. The span at 60–71 shows a compositional bias: basic residues; it reads GGKKPWRQKGTG.

The protein belongs to the universal ribosomal protein uL4 family. In terms of assembly, part of the 50S ribosomal subunit.

One of the primary rRNA binding proteins, this protein initially binds near the 5'-end of the 23S rRNA. It is important during the early stages of 50S assembly. It makes multiple contacts with different domains of the 23S rRNA in the assembled 50S subunit and ribosome. Its function is as follows. Forms part of the polypeptide exit tunnel. The chain is Large ribosomal subunit protein uL4 from Syntrophomonas wolfei subsp. wolfei (strain DSM 2245B / Goettingen).